Reading from the N-terminus, the 131-residue chain is U-scoloptoxin-Er5e (131 aa).

Positions 1–22 are cleaved as a signal peptide; the sequence is MKTNCEFPLLCLLIVLVANVEG. Positions 23–94 are excised as a propeptide; the sequence is EVEDNELKMV…KRLWRNWERR (72 aa). RLWRNWE repeat units lie at residues 34–40, 61–67, and 86–92; these read RLWRNWE. The residue at position 95 (Gln95) is a Pyrrolidone carboxylic acid. The RLWRNWE 4; approximate repeat unit spans residues 107-113; it reads ELWRNWE. The propeptide occupies 112-131; sequence WEDLKRRQVVDLNDEQKTTG.

Belongs to the scoloptoxin-08 family. In terms of tissue distribution, expressed by the venom gland.

The protein resides in the secreted. The polypeptide is U-scoloptoxin-Er5e (Ethmostigmus rubripes (Giant centipede)).